A 61-amino-acid chain; its full sequence is Protein translocase subunit SecE (61 aa).

Residues 38–58 (GIGMILIGTIGMIIRIIGYLV) form a helical membrane-spanning segment.

The protein belongs to the SecE/SEC61-gamma family. As to quaternary structure, component of the Sec protein translocase complex. Heterotrimer consisting of SecY (alpha), SecG (beta) and SecE (gamma) subunits. The heterotrimers can form oligomers, although 1 heterotrimer is thought to be able to translocate proteins. Interacts with the ribosome. May interact with SecDF, and other proteins may be involved.

The protein localises to the cell membrane. In terms of biological role, essential subunit of the Sec protein translocation channel SecYEG. Clamps together the 2 halves of SecY. May contact the channel plug during translocation. The sequence is that of Protein translocase subunit SecE from Thermococcus kodakarensis (strain ATCC BAA-918 / JCM 12380 / KOD1) (Pyrococcus kodakaraensis (strain KOD1)).